The following is an 89-amino-acid chain: Arminin 7591 (89 aa).

Positions 1–18 (MRSAFAVLFLALIAITYS) are cleaved as a signal peptide. Positions 19-58 (KNYEDVKEEIKNEVENEILKDLEEDVNEFDDNVQEEVNDA) are excised as a propeptide. Position 86 is a leucine amide (Leu-86).

This sequence belongs to the arminin family. As to expression, expressed in entodermal epithelium along the body column.

The protein resides in the secreted. It localises to the target cell membrane. Functionally, antimicrobial peptide with a broad-spectrum antimicrobial activity. Keeps its antibacterial activity under a wide range of salt concentrations that mimic physiological conditions of human blood, which is surprising, since Hydra is an obligate freshwater animal with nearly no salt tolerance. Does not affect red blood cells. This is Arminin 7591 from Hydra vulgaris (Hydra).